Reading from the N-terminus, the 348-residue chain is Mitochondrial glycine transporter (348 aa).

3 Solcar repeats span residues threonine 10–asparagine 94, leucine 130–histidine 214, and arginine 249–arginine 333. The next 6 membrane-spanning stretches (helical) occupy residues phenylalanine 16–glutamine 41, glycine 69–alanine 95, leucine 136–glutamate 161, glycine 189–lysine 212, isoleucine 253–isoleucine 279, and glycine 308–valine 326.

This sequence belongs to the mitochondrial carrier (TC 2.A.29) family. SLC25A38 subfamily.

It localises to the mitochondrion inner membrane. It carries out the reaction glycine(in) = glycine(out). Mitochondrial glycine transporter that imports glycine into the mitochondrial matrix. Plays an important role in providing glycine for the first enzymatic step in heme biosynthesis, the condensation of glycine with succinyl-CoA to produce 5-aminolevulinate (ALA) in the mitochondrial matrix. The protein is Mitochondrial glycine transporter (mic-13) of Neurospora crassa (strain ATCC 24698 / 74-OR23-1A / CBS 708.71 / DSM 1257 / FGSC 987).